Here is a 155-residue protein sequence, read N- to C-terminus: uncharacterized protein (155 aa).

A run of 4 helical transmembrane segments spans residues 25 to 45, 50 to 70, 91 to 111, and 118 to 138; these read LPMG…FGWT, IFWF…IMTS, GVKI…ESLF, and WGCT…PILF.

Belongs to the major facilitator superfamily. CAR1 family.

The protein localises to the membrane. This is an uncharacterized protein from Schizosaccharomyces pombe (strain 972 / ATCC 24843) (Fission yeast).